An 851-amino-acid polypeptide reads, in one-letter code: DEAD-box ATP-dependent RNA helicase 29 (851 aa).

The segment at 1 to 49 is disordered; that stretch reads MARLNPSKPSSRGGKPRSSSADAMAEHKPPPGRPKREGEGASKKKAKSG. Residues 7–20 show a composition bias toward low complexity; sequence SKPSSRGGKPRSSS. Over residues 24–42 the composition is skewed to basic and acidic residues; that stretch reads MAEHKPPPGRPKREGEGAS. The Q motif motif lies at 49 to 77; the sequence is GGFESMGLCEEVYRGVRHKGYRVPTPIQR. The Helicase ATP-binding domain maps to 80 to 253; the sequence is MPLILAGHDI…KAGLRDPQIV (174 aa). 93-100 contacts ATP; sequence ARTGSGKT. The short motif at 201-204 is the DEAD box element; it reads DEAD. The 150-residue stretch at 277–426 folds into the Helicase C-terminal domain; sequence KLAALLYLVR…PAPTEEELLK (150 aa). Residues 702–851 are disordered; that stretch reads KWQQKTHRSI…KGKMKGKGTR (150 aa). Residues 733–746 are compositionally biased toward basic residues; it reads RGNRKHTAAGRGRR. Composition is skewed to basic and acidic residues over residues 773 to 787 and 796 to 825; these read DIAR…ESKF and RHDG…DGNG. A compositionally biased stretch (basic residues) spans 841–851; the sequence is GKGKMKGKGTR.

This sequence belongs to the DEAD box helicase family. DDX54/DBP10 subfamily.

It catalyses the reaction ATP + H2O = ADP + phosphate + H(+). This is DEAD-box ATP-dependent RNA helicase 29 from Oryza sativa subsp. indica (Rice).